Here is a 474-residue protein sequence, read N- to C-terminus: L-arabinose isomerase (474 aa).

The Mn(2+) site is built by E306, E331, H348, and H447.

This sequence belongs to the arabinose isomerase family. Requires Mn(2+) as cofactor.

The catalysed reaction is beta-L-arabinopyranose = L-ribulose. It participates in carbohydrate degradation; L-arabinose degradation via L-ribulose; D-xylulose 5-phosphate from L-arabinose (bacterial route): step 1/3. Functionally, catalyzes the conversion of L-arabinose to L-ribulose. This chain is L-arabinose isomerase, found in Leuconostoc mesenteroides subsp. mesenteroides (strain ATCC 8293 / DSM 20343 / BCRC 11652 / CCM 1803 / JCM 6124 / NCDO 523 / NBRC 100496 / NCIMB 8023 / NCTC 12954 / NRRL B-1118 / 37Y).